The sequence spans 186 residues: Ribosome-recycling factor (186 aa).

Belongs to the RRF family.

It localises to the cytoplasm. Its function is as follows. Responsible for the release of ribosomes from messenger RNA at the termination of protein biosynthesis. May increase the efficiency of translation by recycling ribosomes from one round of translation to another. In Cupriavidus metallidurans (strain ATCC 43123 / DSM 2839 / NBRC 102507 / CH34) (Ralstonia metallidurans), this protein is Ribosome-recycling factor.